A 213-amino-acid polypeptide reads, in one-letter code: Adenylate kinase (213 aa).

10-15 (GAGKGT) is an ATP binding site. The segment at 30 to 59 (STGDMLRAALKEGTPLGLEAKKYMDQGALV) is NMP. Residues Thr31, Arg36, 57–59 (ALV), 85–88 (GFPR), and Gln92 contribute to the AMP site. The LID stretch occupies residues 126–163 (GRRTCRSCGAGFHVMFDPPKTDGKCDKCGGELYQRDDD). Residue Arg127 participates in ATP binding. 4 residues coordinate Zn(2+): Cys130, Cys133, Cys150, and Cys153. Residues Arg160 and Arg171 each coordinate AMP. Residue Gly199 coordinates ATP.

Belongs to the adenylate kinase family. In terms of assembly, monomer.

The protein resides in the cytoplasm. It catalyses the reaction AMP + ATP = 2 ADP. The protein operates within purine metabolism; AMP biosynthesis via salvage pathway; AMP from ADP: step 1/1. In terms of biological role, catalyzes the reversible transfer of the terminal phosphate group between ATP and AMP. Plays an important role in cellular energy homeostasis and in adenine nucleotide metabolism. The polypeptide is Adenylate kinase (Syntrophobacter fumaroxidans (strain DSM 10017 / MPOB)).